A 298-amino-acid chain; its full sequence is MLKIGSHVSMSGKKMLLAASEEAVSYGATTFMIYTGAPQNTRRKPIEELNIEAGRKHMEQNGIEEIIVHAPYIINVGNTTKPETFQLGVDFLRMEIERTSALGVAKQIVLHPGAHVGAGADAGIQQIIKGLNEVLTPDQTVNIALETMAGKGTECGRSFEEIAKIIDGVKYNEKLSVCFDTCHTHDAGYDIVNDFDGVLNEFDKIVGIDRLQVLHINDSKNVRGAGKDRHENIGFGHIGYKALHHIVHHPQLTHVPKILETPYVGEDKKDKKPPYKLEIEMLKNGTFDEGLLEKIKAQ.

The Zn(2+) site is built by H69, H111, E146, D180, H183, H215, D228, H230, and E260.

The protein belongs to the AP endonuclease 2 family. Zn(2+) serves as cofactor.

The catalysed reaction is Endonucleolytic cleavage to 5'-phosphooligonucleotide end-products.. Its function is as follows. Endonuclease IV plays a role in DNA repair. It cleaves phosphodiester bonds at apurinic or apyrimidinic (AP) sites, generating a 3'-hydroxyl group and a 5'-terminal sugar phosphate. This Bacillus cereus (strain 03BB102) protein is Probable endonuclease 4.